The following is a 685-amino-acid chain: MDVCARLALWLLWGLLLHQGQSLSHSHSEKNTGASSGATSEESTEAEFCRIDKPLCHSEDEKLSFEAVRNIHKLMDDDANGDVDVEESDEFLREDLNYHDPTVKHSTFHGEDKLISVEDLWKAWKASEVYNWTVDEVIQWLITYVELPQYEETFRKLQLTGHAMPRLAVTNTTMTGTVLKMTDRSHRQKLQLKALDTVLFGPPLLTRHNHLKDFMLVVSIVIGVGGCWFAYIQNRYSKEHMKKMMKDLEGLHRAEQSLHDLQERLHKAQEEHRTVEVEKVHLEKKLRDEINLAKQEAQRLKELREGTENERSRQKYAEEELEQVREALRKAEKELESHSSWYAPEALQKWLQLTHEVEVQYYNIKKQNAERQLLVAKEGAEKIKKKRNTLFGTFHVAHSSSLDDVDHKILTAKQALSEVTAALRERLHRWQQIEILCGFQIVNNPGIHSLVAALNIDPSWMGSTRPNPAHFIMTDDVDDMDEEIVSPLSMQSPSLQSSVRQRLTEPQHGLGSQRDLTHSDSESSLHTSDRQRVAPKPPQMGRAADEALNATSSNGSHRLIEGVHPGSLVEKLPDSPALAKKTILALNHGLDKAHSLMELNPSVPPGGSPLLDSSHSHSPSSPDPDTPSPVGDSRALQGSRNTRIPHLAGKKAMAEEDNGSIGEETDSSPGRKKFPLKIFKKPLKK.

The first 22 residues, 1 to 22 (MDVCARLALWLLWGLLLHQGQS), serve as a signal peptide directing secretion. Topologically, residues 23 to 213 (LSHSHSEKNT…LLTRHNHLKD (191 aa)) are extracellular. Positions 24–43 (SHSHSEKNTGASSGATSEES) are disordered. Residues 32–41 (TGASSGATSE) show a composition bias toward low complexity. 2 consecutive EF-hand domains span residues 64-97 (SFEAVRNIHKLMDDDANGDVDVEESDEFLREDLN) and 102-126 (TVKHSTFHGEDKLISVEDLWKAWKA). Positions 76, 78, 80, 82, and 87 each coordinate Ca(2+). N-linked (GlcNAc...) asparagine glycosylation is found at N131 and N171. Residues 132–200 (WTVDEVIQWL…QLKALDTVLF (69 aa)) enclose the SAM domain. A helical membrane pass occupies residues 214 to 234 (FMLVVSIVIGVGGCWFAYIQN). Topologically, residues 235 to 685 (RYSKEHMKKM…LKIFKKPLKK (451 aa)) are cytoplasmic. A coiled-coil region spans residues 248-442 (LEGLHRAEQS…IEILCGFQIV (195 aa)). At S257 the chain carries Phosphoserine. Residues 344 to 442 (PEALQKWLQL…IEILCGFQIV (99 aa)) are SOAR/CAD. Positions 475–483 (DDVDDMDEE) are contributes to fast Ca(2+)-dependent inactivation of CRAC channels. Low complexity predominate over residues 490–499 (MQSPSLQSSV). Residues 490–542 (MQSPSLQSSVRQRLTEPQHGLGSQRDLTHSDSESSLHTSDRQRVAPKPPQMGR) are disordered. T504 carries the post-translational modification Phosphothreonine. S512 is modified (phosphoserine). Positions 515–532 (DLTHSDSESSLHTSDRQR) are enriched in basic and acidic residues. A Phosphothreonine modification is found at T517. Phosphoserine occurs at positions 519, 521, 523, 524, 567, 575, 602, 608, 618, 621, and 628. The interval 596 to 685 (LMELNPSVPP…LKIFKKPLKK (90 aa)) is disordered. The span at 608–620 (SPLLDSSHSHSPS) shows a compositional bias: low complexity. The Microtubule tip localization signal signature appears at 642-645 (TRIP). Positions 655–666 (EEDNGSIGEETD) are enriched in acidic residues. Residue S660 is modified to Phosphoserine. T665 bears the Phosphothreonine mark. S668 bears the Phosphoserine mark. Residues 670-685 (GRKKFPLKIFKKPLKK) show a composition bias toward basic residues. The tract at residues 672-685 (KKFPLKIFKKPLKK) is required for generation of inwardly rectifying CRAC currents.

In terms of assembly, monomer in the presence of Ca(2+). It oligomerizes in absence of Ca(2+). Forms homooligomers and heterooligomers with STIM2. Interacts with pore-forming subunits of CRAC channels, ORAI1, ORAI2 and ORAI3; this interaction is potentiated upon Ca(2+) store depletion. Interacts (via the transmembrane region and the SOAR/CAD domain) with SPPL3; the interaction promotes the binding of STIM1 to ORAI1. Interacts with ORAI1. Interacts with MAPRE1; probably required for targeting to the growing microtubule plus ends. Interacts with CRACR2A/EFCAB4B; the interaction is direct and takes place in absence of Ca(2+). Forms a complex with CRACR2A/EFCAB4B and ORAI1 at low concentration of Ca(2+), the complex dissociates at elevated Ca(2+) concentrations. Interacts with SARAF, promoting a slow inactivation of STIM1-dependent SOCE activity, possibly by facilitating the deoligomerization of STIM1. Interacts with EFHB; the interaction takes place upon Ca(2+)-store depletion and inhibits the association with SARAF. Interacts with ASPH. Interacts with SLC35G1; intracellular Ca(2+)-dependent. May interact with ATP1A1, ATP2A2, ATP2B1, ATP2B4, KPNB1 and XPO1; through SLC35G1. Interacts with TMEM203. Interacts with STIMATE, promoting STIM1 conformational switch. Interacts with TMEM178A. Interacts with CASQ1 (via C-terminal end and preferentially with the monomeric form); this interaction increases in response to a depletion of intracellular Ca(2+), decreases both STIM1 aggregation and clustering, interaction of STIM1 with ORAI1 and store-operated Ca(2+) entry (SOCE) activity. Interacts with ADCY8. Post-translationally, glycosylation is required for cell surface expression. In terms of processing, phosphorylated predominantly on Ser residues.

Its subcellular location is the cell membrane. It localises to the endoplasmic reticulum membrane. It is found in the sarcoplasmic reticulum. The protein localises to the cytoplasm. The protein resides in the cytoskeleton. Acts as a Ca(2+) sensor that gates two major inward rectifying Ca(2+) channels at the plasma membrane: Ca(2+) release-activated Ca(2+) (CRAC) channels and arachidonate-regulated Ca(2+)-selective (ARC) channels. Plays a role in mediating store-operated Ca(2+) entry (SOCE), a Ca(2+) influx following depletion of intracellular Ca(2+) stores. Upon Ca(2+) depletion, translocates from the endoplasmic reticulum to the plasma membrane where it activates CRAC channel pore-forming subunits ORA1, ORA2 and ORAI3 to generate sustained and oscillatory Ca(2+) entry. Involved in enamel formation. This chain is Stromal interaction molecule 1, found in Rattus norvegicus (Rat).